The primary structure comprises 81 residues: Small ribosomal subunit protein eS21 (81 aa).

This sequence belongs to the eukaryotic ribosomal protein eS21 family. In terms of assembly, component of the 40S small ribosomal subunit.

The protein resides in the cytoplasm. It is found in the cytosol. Its subcellular location is the rough endoplasmic reticulum. Component of the small ribosomal subunit. The ribosome is a large ribonucleoprotein complex responsible for the synthesis of proteins in the cell. This is Small ribosomal subunit protein eS21 (rps21) from Danio rerio (Zebrafish).